A 361-amino-acid chain; its full sequence is 3-dehydroquinate synthase (361 aa).

Residues 69–74 (DGEEYK), 103–107 (GVIGD), 127–128 (TT), lysine 140, lysine 149, and 167–170 (TLDT) contribute to the NAD(+) site. Positions 182, 245, and 262 each coordinate Zn(2+).

It belongs to the sugar phosphate cyclases superfamily. Dehydroquinate synthase family. It depends on Co(2+) as a cofactor. Zn(2+) is required as a cofactor. Requires NAD(+) as cofactor.

The protein resides in the cytoplasm. It catalyses the reaction 7-phospho-2-dehydro-3-deoxy-D-arabino-heptonate = 3-dehydroquinate + phosphate. It participates in metabolic intermediate biosynthesis; chorismate biosynthesis; chorismate from D-erythrose 4-phosphate and phosphoenolpyruvate: step 2/7. Functionally, catalyzes the conversion of 3-deoxy-D-arabino-heptulosonate 7-phosphate (DAHP) to dehydroquinate (DHQ). The sequence is that of 3-dehydroquinate synthase from Thioalkalivibrio sulfidiphilus (strain HL-EbGR7).